A 640-amino-acid polypeptide reads, in one-letter code: Ribonuclease J (640 aa).

Zn(2+) is bound by residues H75, H77, D79, H80, H145, and D167. H368–H372 is a substrate binding site. H394 serves as a coordination point for Zn(2+). The disordered stretch occupies residues T578–S640. The span at P598–V610 shows a compositional bias: basic and acidic residues.

The protein belongs to the metallo-beta-lactamase superfamily. RNA-metabolizing metallo-beta-lactamase-like family. Bacterial RNase J subfamily. Homodimer, may be a subunit of the RNA degradosome. The cofactor is Zn(2+).

Its subcellular location is the cytoplasm. Its function is as follows. An RNase that has 5'-3' exonuclease and possibly endoonuclease activity. Involved in maturation of rRNA and in some organisms also mRNA maturation and/or decay. This Synechocystis sp. (strain ATCC 27184 / PCC 6803 / Kazusa) protein is Ribonuclease J.